The sequence spans 169 residues: Protein YABBY 7 (169 aa).

The C4-type zinc-finger motif lies at 21–48 (CSFCATVLLVSVPCSSVLRVVAVQCGHC). The interval 63-122 (SASIELTPQELDAGPPPGEYSDESSGDDREGRDAEDDAPAPAAAAVANKPPGRKQRTPSA) is disordered.

It belongs to the YABBY family. Expressed in leaf sheaths and flowers.

The protein localises to the nucleus. This chain is Protein YABBY 7 (YAB7), found in Oryza sativa subsp. japonica (Rice).